Consider the following 98-residue polypeptide: Defensin-like protein 219 (98 aa).

A signal peptide spans 1–16; sequence MKTIFVFLTLAVLVSS. 3 disulfide bridges follow: cysteine 68–cysteine 85, cysteine 71–cysteine 90, and cysteine 75–cysteine 92.

Belongs to the DEFL family.

It localises to the secreted. In Arabidopsis thaliana (Mouse-ear cress), this protein is Defensin-like protein 219.